A 171-amino-acid polypeptide reads, in one-letter code: uncharacterized protein (171 aa).

It belongs to the HHV-5 UL128 protein family. As to quaternary structure, forms the envelope pentamer complex (PC) composed of gH, gL, UL128, UL130, and UL131A. The pentamer interacts with host NRP2.

The protein resides in the virion membrane. Functionally, plays a role in viral entry into host cells. Forms a pentameric complex at the surface of the viral envelope together with gH, gL, UL130 and UL131. This complex is required for entry in epithelial, endothelial and myeloid host cells. Mechanistically, engages host receptor(s) including neurophilin 2/NRP2 to mediate infection. Additionally, monomeric UL128 may interfere with certain inflammatory cytokines to increase infection and dissemination by blocking monocytes migration. This is an uncharacterized protein from Human cytomegalovirus (strain AD169) (HHV-5).